The sequence spans 126 residues: Aspartate 1-decarboxylase 2 (126 aa).

The active-site Schiff-base intermediate with substrate; via pyruvic acid is the serine 25. Serine 25 is subject to Pyruvic acid (Ser). Substrate is bound at residue threonine 57. Residue tyrosine 58 is the Proton donor of the active site. 73–75 (GSA) contacts substrate.

It belongs to the PanD family. As to quaternary structure, heterooctamer of four alpha and four beta subunits. It depends on pyruvate as a cofactor. In terms of processing, is synthesized initially as an inactive proenzyme, which is activated by self-cleavage at a specific serine bond to produce a beta-subunit with a hydroxyl group at its C-terminus and an alpha-subunit with a pyruvoyl group at its N-terminus.

It localises to the cytoplasm. It carries out the reaction L-aspartate + H(+) = beta-alanine + CO2. Its pathway is cofactor biosynthesis; (R)-pantothenate biosynthesis; beta-alanine from L-aspartate: step 1/1. Functionally, catalyzes the pyruvoyl-dependent decarboxylation of aspartate to produce beta-alanine. This chain is Aspartate 1-decarboxylase 2, found in Polaromonas sp. (strain JS666 / ATCC BAA-500).